A 236-amino-acid chain; its full sequence is Aspartate/glutamate leucyltransferase (236 aa).

The protein belongs to the R-transferase family. Bpt subfamily.

Its subcellular location is the cytoplasm. The enzyme catalyses N-terminal L-glutamyl-[protein] + L-leucyl-tRNA(Leu) = N-terminal L-leucyl-L-glutamyl-[protein] + tRNA(Leu) + H(+). It catalyses the reaction N-terminal L-aspartyl-[protein] + L-leucyl-tRNA(Leu) = N-terminal L-leucyl-L-aspartyl-[protein] + tRNA(Leu) + H(+). Functions in the N-end rule pathway of protein degradation where it conjugates Leu from its aminoacyl-tRNA to the N-termini of proteins containing an N-terminal aspartate or glutamate. The chain is Aspartate/glutamate leucyltransferase from Halorhodospira halophila (strain DSM 244 / SL1) (Ectothiorhodospira halophila (strain DSM 244 / SL1)).